The following is a 122-amino-acid chain: Large ribosomal subunit protein uL14 (122 aa).

It belongs to the universal ribosomal protein uL14 family. As to quaternary structure, part of the 50S ribosomal subunit. Forms a cluster with proteins L3 and L19. In the 70S ribosome, L14 and L19 interact and together make contacts with the 16S rRNA in bridges B5 and B8.

In terms of biological role, binds to 23S rRNA. Forms part of two intersubunit bridges in the 70S ribosome. This is Large ribosomal subunit protein uL14 from Bacillus pumilus (strain SAFR-032).